The sequence spans 260 residues: ARL14 effector protein (260 aa).

Met-1 is modified (N-acetylmethionine). Residue Lys-177 forms a Glycyl lysine isopeptide (Lys-Gly) (interchain with G-Cter in SUMO2) linkage. Ser-183 is modified (phosphoserine).

In terms of assembly, interacts with ARL14 and MYO1E.

The protein resides in the cytoplasm. Functionally, through its interaction with ARL14 and MYO1E, may connect MHC class II-containing cytoplasmic vesicles to the actin network and hence controls the movement of these vesicles along the actin cytoskeleton in dendritic cells. In Bos taurus (Bovine), this protein is ARL14 effector protein (ARL14EP).